The following is a 484-amino-acid chain: Fumigaclavine B O-acetyltransferase ifgI (484 aa).

The protein belongs to the fumigaclavine B O-acetyltransferase family. In terms of assembly, monomer.

It catalyses the reaction fumigaclavine B + acetyl-CoA = fumigaclavine A + CoA. It functions in the pathway alkaloid biosynthesis; ergot alkaloid biosynthesis. Its function is as follows. Fumigaclavine B O-acetyltransferase; part of the gene cluster that mediates the biosynthesis of isofumigaclavines, fungal ergot alkaloids. The tryptophan dimethylallyltransferase ifgA catalyzes the first step of ergot alkaloid biosynthesis by condensing dimethylallyl diphosphate (DMAP) and tryptophan to form 4-dimethylallyl-L-tryptophan. The second step is catalyzed by the methyltransferase ifgB that methylates 4-dimethylallyl-L-tryptophan in the presence of S-adenosyl-L-methionine, resulting in the formation of N-methyl-dimethylallyl-L-tryptophan. The catalase ifgD and the FAD-dependent oxidoreductase ifgC then transform N-methyl-dimethylallyl-L-tryptophan to chanoclavine-I which is further oxidized by ifgE in the presence of NAD(+), resulting in the formation of chanoclavine-I aldehyde. The chanoclavine-I aldehyde reductases ifgG and/or fgaOx3 reduce chanoclavine-I aldehyde to dihydrochanoclavine-I aldehyde that spontaneously dehydrates to form 6,8-dimethyl-6,7-didehydroergoline. The festuclavine dehydrogenases ifgF1 and/or ifgF2 then catalyze the reduction of 6,8-dimethyl-6,7-didehydroergoline to form festuclavine. Hydrolysis of festuclavine by a yet undetermined cytochrome P450 monooxygenase (called ifgH) then leads to the formation of isofumigaclavine B which is in turn acetylated by ifgI to isofumigaclavine A. Penicillium roqueforti has interestingly at least two sets of genes for the consumption of chanoclavine-I aldehyde on three different loci, the OYEs ifgG/fgaOx3 and the festuclavine synthase homologs ifgF1/ifgF2. The reason for the duplication of these genes is unclear, probably to ensure the conversion of chanoclavine-I aldehyde by differential gene expression under various environmental conditions. In Penicillium roqueforti (strain FM164), this protein is Fumigaclavine B O-acetyltransferase ifgI.